A 156-amino-acid chain; its full sequence is S-ribosylhomocysteine lyase (156 aa).

Positions 54, 58, and 123 each coordinate Fe cation.

The protein belongs to the LuxS family. In terms of assembly, homodimer. It depends on Fe cation as a cofactor.

It catalyses the reaction S-(5-deoxy-D-ribos-5-yl)-L-homocysteine = (S)-4,5-dihydroxypentane-2,3-dione + L-homocysteine. In terms of biological role, involved in the synthesis of autoinducer 2 (AI-2) which is secreted by bacteria and is used to communicate both the cell density and the metabolic potential of the environment. The regulation of gene expression in response to changes in cell density is called quorum sensing. Catalyzes the transformation of S-ribosylhomocysteine (RHC) to homocysteine (HC) and 4,5-dihydroxy-2,3-pentadione (DPD). In Ligilactobacillus salivarius (strain UCC118) (Lactobacillus salivarius), this protein is S-ribosylhomocysteine lyase.